We begin with the raw amino-acid sequence, 201 residues long: MQTSPLLTQLMEALRCLPGVGPKSAQRMAFTLLQRDRSGGMRLAQALTRAMAEIGHCADCRTFTEQEVCNICANPRRQENGQICVVESPADIYAIEQTGQFSGRYFVLMGHLSPLDGIGPDDIGLDRLEQRLVSEKISELILATNPTVEGEATANYIAELCAQYGVEASRIAHGVPVGGELEMVDGTTLSHSLAGRHKIIL.

The C4-type zinc finger occupies 57–72 (CADCRTFTEQEVCNIC). The Toprim domain maps to 81–176 (GQICVVESPA…EASRIAHGVP (96 aa)).

The protein belongs to the RecR family.

In terms of biological role, may play a role in DNA repair. It seems to be involved in an RecBC-independent recombinational process of DNA repair. It may act with RecF and RecO. The chain is Recombination protein RecR from Salmonella arizonae (strain ATCC BAA-731 / CDC346-86 / RSK2980).